Reading from the N-terminus, the 101-residue chain is Salivary thrombin inhibitor anophelin (101 aa).

The first 21 residues, 1–21 (MASKVIVIALLCIALAAFVQG), serve as a signal peptide directing secretion. Positions 26–101 (THGEEPEYDE…SDSSSGSTEN (76 aa)) are disordered. Residues 31–40 (PEYDEDDGAD) show a composition bias toward acidic residues. The tract at residues 75–78 (DPGR) is blocks active site cleft of host thrombin in a reverse direction compared to substrates. A compositionally biased stretch (basic and acidic residues) spans 75–87 (DPGRRPEFLKQHN). Polar residues predominate over residues 88 to 101 (NENQSDSSSGSTEN). N90 is a glycosylation site (N-linked (GlcNAc...) asparagine).

Belongs to the anophelin family. As to quaternary structure, interacts with human F2 (thrombin); the interaction results in thrombin inhibition.

Its subcellular location is the secreted. Its function is as follows. Salivary protein with anticoagulant activity that inhibits host thrombin (F2). In Anopheles stephensi (Indo-Pakistan malaria mosquito), this protein is Salivary thrombin inhibitor anophelin.